Reading from the N-terminus, the 385-residue chain is 1-deoxy-D-xylulose 5-phosphate reductoisomerase (385 aa).

Positions 10, 11, 13, 36, and 38 each coordinate NADPH. Lysine 123 is a binding site for 1-deoxy-D-xylulose 5-phosphate. Glutamate 124 contacts NADPH. Aspartate 148 contributes to the Mn(2+) binding site. 1-deoxy-D-xylulose 5-phosphate is bound by residues serine 149, glutamate 150, serine 172, and histidine 195. Glutamate 150 is a binding site for Mn(2+). Position 201 (glycine 201) interacts with NADPH. Residues serine 208, asparagine 213, lysine 214, and glutamate 217 each coordinate 1-deoxy-D-xylulose 5-phosphate. Glutamate 217 lines the Mn(2+) pocket.

It belongs to the DXR family. The cofactor is Mg(2+). It depends on Mn(2+) as a cofactor.

It carries out the reaction 2-C-methyl-D-erythritol 4-phosphate + NADP(+) = 1-deoxy-D-xylulose 5-phosphate + NADPH + H(+). It functions in the pathway isoprenoid biosynthesis; isopentenyl diphosphate biosynthesis via DXP pathway; isopentenyl diphosphate from 1-deoxy-D-xylulose 5-phosphate: step 1/6. Functionally, catalyzes the NADPH-dependent rearrangement and reduction of 1-deoxy-D-xylulose-5-phosphate (DXP) to 2-C-methyl-D-erythritol 4-phosphate (MEP). The polypeptide is 1-deoxy-D-xylulose 5-phosphate reductoisomerase (Anaplasma phagocytophilum (strain HZ)).